Reading from the N-terminus, the 728-residue chain is Protein Hook homolog 1 (728 aa).

At M1 the chain carries N-acetylmethionine. The segment at 1 to 555 (MEDPQPLPQS…LKQKLEAHME (555 aa)) is sufficient for interaction with microtubules. The Calponin-homology (CH) domain occupies 12 to 128 (LPLCDSLIIW…RLLQLILGCA (117 aa)). Coiled-coil stretches lie at residues 168–443 (PASD…LNQA) and 477–658 (LRLQ…AKLR). Residue S235 is modified to Phosphoserine. The interval 481-510 (QEGTENERIEQLQEQLEQKHRKMNELETEQ) is disordered. Positions 657–728 (LRDYEEKLIV…SVKVPAAASD (72 aa)) are sufficient for interaction with AKTIP and VPS18. 2 positions are modified to phosphoserine: S719 and S727.

This sequence belongs to the hook family. In terms of assembly, self-associates. Component of the FTS/Hook/FHIP complex (FHF complex), composed of AKTIP/FTS, FHIP1B, and one or more members of the Hook family of proteins HOOK1, HOOK2, and HOOK3. Interacts directly with AKTIP/FTS, HOOK2 and HOOK3. Associates with several subunits of the homotypic vesicular sorting complex (the HOPS complex) including VPS16, VPS18, VPS39 and VPS41; these interactions may be indirect. Interacts with CCDC181. Interacts (via coiled-coil region) with RIMBP3 (via C-terminus). Interacts with LRGUK (via guanylate kinase-like domain). Interacts with microtubules. May interacts with CLN3. Interacts with AP4M1; the interaction is direct, mediates the interaction between FTS-Hook-FHIP (FHF) complex and AP-4 and the perinuclear distribution of AP-4. Mainly expressed in testis.

Its subcellular location is the cytoplasm. The protein resides in the cytoskeleton. Its function is as follows. Component of the FTS/Hook/FHIP complex (FHF complex). The FHF complex may function to promote vesicle trafficking and/or fusion via the homotypic vesicular protein sorting complex (the HOPS complex). FHF complex promotes the distribution of AP-4 complex to the perinuclear area of the cell. Required for spermatid differentiation. Probably involved in the positioning of the microtubules of the manchette and the flagellum in relation to the membrane skeleton. This chain is Protein Hook homolog 1 (Hook1), found in Mus musculus (Mouse).